A 549-amino-acid polypeptide reads, in one-letter code: Cation/acetate symporter ActP (549 aa).

Transmembrane regions (helical) follow at residues 33 to 53 (WQAI…TYWA), 77 to 97 (LAIA…ALVF), 103 to 123 (GLIY…LIAE), 148 to 168 (ILSA…QMVG), 183 to 203 (IAVV…GMLA), 206 to 226 (WVQI…AFMV), 262 to 282 (ISAL…PHIL), 303 to 323 (GFMG…IMLV), 355 to 375 (LFLG…VAGL), 404 to 424 (VSKI…VLFE), 428 to 448 (IAFM…PIIL), 464 to 484 (GGWL…TIWV), and 493 to 513 (IFPY…GIWF).

It belongs to the sodium:solute symporter (SSF) (TC 2.A.21) family.

The protein localises to the cell inner membrane. Functionally, transports acetate. The chain is Cation/acetate symporter ActP from Escherichia coli O6:K15:H31 (strain 536 / UPEC).